Consider the following 439-residue polypeptide: Glutamate-1-semialdehyde 2,1-aminomutase (439 aa).

Residue lysine 270 is modified to N6-(pyridoxal phosphate)lysine.

Belongs to the class-III pyridoxal-phosphate-dependent aminotransferase family. HemL subfamily. Homodimer. Pyridoxal 5'-phosphate is required as a cofactor.

It is found in the cytoplasm. It catalyses the reaction (S)-4-amino-5-oxopentanoate = 5-aminolevulinate. It functions in the pathway porphyrin-containing compound metabolism; protoporphyrin-IX biosynthesis; 5-aminolevulinate from L-glutamyl-tRNA(Glu): step 2/2. This is Glutamate-1-semialdehyde 2,1-aminomutase from Kocuria rhizophila (strain ATCC 9341 / DSM 348 / NBRC 103217 / DC2201).